The primary structure comprises 431 residues: Pyroglutamylated RF-amide peptide receptor (431 aa).

Topologically, residues 1–46 are extracellular; the sequence is MQALNITPEQFSRLLRDHNLTREQFIALYRLRPLVYTPELPGRAKL. N-linked (GlcNAc...) asparagine glycosylation is present at asparagine 19. Residues 47–67 traverse the membrane as a helical segment; the sequence is ALVLTGVLIFALALFGNALVF. The Cytoplasmic segment spans residues 68–81; it reads YVVTRSKAMRTVTN. A helical membrane pass occupies residues 82–102; the sequence is IFICSLALSDLLITFFCIPVT. Topologically, residues 103 to 120 are extracellular; sequence MLQNISDNWLGGAFICKM. The chain crosses the membrane as a helical span at residues 121–141; that stretch reads VPFVQSTAVVTEILTMTCIAV. At 142-162 the chain is on the cytoplasmic side; it reads ERHQGLVHPFKMKWQYTNRRA. The chain crosses the membrane as a helical span at residues 163–183; it reads FTMLGVVWLVAVIVGSPMWHV. The Extracellular segment spans residues 184 to 212; it reads QQLEIKYDFLYEKEHICCLEEWTSPVHQK. A helical transmembrane segment spans residues 213 to 233; the sequence is IYTTFILVILFLLPLMVMLIL. Topologically, residues 234 to 271 are cytoplasmic; that stretch reads YSKIGYELWIKKRVGDGSVLRTIHGKEMSKIARKKKRA. Residues 272-292 traverse the membrane as a helical segment; it reads VIMMVTVVALFAVCWAPFHVV. Residues 293 to 311 are Extracellular-facing; it reads HMMIEYSNFEKEYDDVTIK. The chain crosses the membrane as a helical span at residues 312 to 332; it reads MIFAIVQIIGFSNSICNPIVY. The Cytoplasmic segment spans residues 333 to 431; that stretch reads AFMNENFKKN…AENSPLDSGH (99 aa).

The protein belongs to the G-protein coupled receptor 1 family. Expressed widely in the brain with high levels in the hypothalamus, trigeminal ganglia and vestibular neurons, and moderate levels in the amygdala, cortex, pituitary, hippocampus, thalamus, caudate nucleus and medulla oblongata. In peripheral tissues, expressed at high levels in the retina and at moderate levels in the heart, kidney, testis and thyroid.

The protein resides in the cell membrane. Functionally, receptor for the orexigenic neuropeptide QRFP. The activity of this receptor is mediated by G proteins that modulate adenylate cyclase activity and intracellular calcium levels. The sequence is that of Pyroglutamylated RF-amide peptide receptor (QRFPR) from Homo sapiens (Human).